A 447-amino-acid chain; its full sequence is N-succinylarginine dihydrolase (447 aa).

Substrate-binding positions include 19-28 (AGLSFGNEAS), Asn110, and 137-138 (HR). The active site involves Glu174. Arg212 contributes to the substrate binding site. Residue His248 is part of the active site. Positions 250 and 359 each coordinate substrate. Cys365 functions as the Nucleophile in the catalytic mechanism.

Belongs to the succinylarginine dihydrolase family. Homodimer.

The catalysed reaction is N(2)-succinyl-L-arginine + 2 H2O + 2 H(+) = N(2)-succinyl-L-ornithine + 2 NH4(+) + CO2. It participates in amino-acid degradation; L-arginine degradation via AST pathway; L-glutamate and succinate from L-arginine: step 2/5. Catalyzes the hydrolysis of N(2)-succinylarginine into N(2)-succinylornithine, ammonia and CO(2). This is N-succinylarginine dihydrolase from Salmonella arizonae (strain ATCC BAA-731 / CDC346-86 / RSK2980).